The chain runs to 426 residues: C4-dicarboxylate transport protein (426 aa).

Helical transmembrane passes span 4–24, 44–64, 76–96, 142–162, 184–204, 222–242, 326–346, and 352–372; these read SIFT…ILLG, LIKM…IAGM, IALL…LVVV, IGAF…MFGF, VIFG…FGAM, LILC…GSIA, IWHQ…AAGV, and IVLA…LALI.

The protein belongs to the dicarboxylate/amino acid:cation symporter (DAACS) (TC 2.A.23) family.

The protein resides in the cell inner membrane. In terms of biological role, responsible for the transport of dicarboxylates such as succinate, fumarate, and malate from the periplasm across the membrane. The polypeptide is C4-dicarboxylate transport protein (Edwardsiella ictaluri (strain 93-146)).